Consider the following 238-residue polypeptide: Pyridoxine 5'-phosphate synthase (238 aa).

Residue asparagine 7 coordinates 3-amino-2-oxopropyl phosphate. Position 9 to 10 (9 to 10 (DH)) interacts with 1-deoxy-D-xylulose 5-phosphate. Residue arginine 18 coordinates 3-amino-2-oxopropyl phosphate. Histidine 43 functions as the Proton acceptor in the catalytic mechanism. 1-deoxy-D-xylulose 5-phosphate is bound by residues arginine 45 and histidine 50. Glutamate 70 acts as the Proton acceptor in catalysis. Threonine 100 contributes to the 1-deoxy-D-xylulose 5-phosphate binding site. The active-site Proton donor is the histidine 190. Residues glycine 191 and 212 to 213 (GH) each bind 3-amino-2-oxopropyl phosphate.

This sequence belongs to the PNP synthase family. In terms of assembly, homooctamer; tetramer of dimers.

It is found in the cytoplasm. It carries out the reaction 3-amino-2-oxopropyl phosphate + 1-deoxy-D-xylulose 5-phosphate = pyridoxine 5'-phosphate + phosphate + 2 H2O + H(+). The protein operates within cofactor biosynthesis; pyridoxine 5'-phosphate biosynthesis; pyridoxine 5'-phosphate from D-erythrose 4-phosphate: step 5/5. Functionally, catalyzes the complicated ring closure reaction between the two acyclic compounds 1-deoxy-D-xylulose-5-phosphate (DXP) and 3-amino-2-oxopropyl phosphate (1-amino-acetone-3-phosphate or AAP) to form pyridoxine 5'-phosphate (PNP) and inorganic phosphate. The protein is Pyridoxine 5'-phosphate synthase of Prochlorococcus marinus (strain MIT 9312).